Here is a 119-residue protein sequence, read N- to C-terminus: uncharacterized protein (119 aa).

The interval 1–20 is disordered; sequence MPHLAAEAHTWPPHISHSTL. Residues 74 to 94 form a helical membrane-spanning segment; the sequence is LLFVVHQGHIGTGLIVFIICW.

Its subcellular location is the membrane. This is an uncharacterized protein from Saccharomyces cerevisiae (strain ATCC 204508 / S288c) (Baker's yeast).